Consider the following 711-residue polypeptide: GDNF-inducible zinc finger protein 1 (711 aa).

A BTB domain is found at 31–103 (CDVTVSVEYQ…VYTAKVQVEE (73 aa)). The segment covering 153–168 (SGSQVSAAPAPRASVA) has biased composition (low complexity). Disordered regions lie at residues 153–220 (SGSQ…PKIR) and 243–312 (RLRE…EGEK). Basic and acidic residues-rich tracts occupy residues 197–212 (PPKK…KEVV), 243–252 (RLREQQKTAE), and 265–277 (SPDR…EQVS). Acidic residues predominate over residues 298-309 (EEEEEEEEEDEE). C2H2-type zinc fingers lie at residues 317 to 340 (FKCS…KHRH), 348 to 371 (YRCD…RHVH), 377 to 400 (FPCE…LQVH), 407 to 429 (HRCG…ERTH), 435 to 457 (YGCT…MRIH), 463 to 485 (FVCD…KRCH), 491 to 513 (FMCE…NRIH), 519 to 541 (FKCE…IKVH), 547 to 569 (YCCD…RRIH), and 575 to 597 (FMCN…TSIH). The residue at position 613 (S613) is a Phosphoserine.

The protein belongs to the krueppel C2H2-type zinc-finger protein family. Interacts with NCL. In terms of tissue distribution, expressed in adult brain, heart, skeletal muscle, kidney and liver. Also detected in fetal brain and kidney, and at lower levels in fetal lung and liver.

Its subcellular location is the cytoplasm. It localises to the nucleus. The protein localises to the nucleoplasm. The protein resides in the nucleolus. Its function is as follows. Transcriptional repressor that binds the GZF1 responsive element (GRE) (consensus: 5'-TGCGCN[TG][CA]TATA-3'). May be regulating VSX2/HOX10 expression. The chain is GDNF-inducible zinc finger protein 1 from Homo sapiens (Human).